Reading from the N-terminus, the 220-residue chain is Imidazoleglycerol-phosphate dehydratase (220 aa).

Substrate is bound by residues E14, 64–72, 90–94, R116, and R138; these read HMIHALAKH and HHTTE. Mn(2+) contacts are provided by H64, H90, H91, and E94. 4 residues coordinate Mn(2+): H162, H186, H187, and E190. Substrate is bound by residues 186–194 and 214–216; these read HHRSESAFK and STK.

This sequence belongs to the imidazoleglycerol-phosphate dehydratase family. It depends on Mn(2+) as a cofactor.

It catalyses the reaction D-erythro-1-(imidazol-4-yl)glycerol 3-phosphate = 3-(imidazol-4-yl)-2-oxopropyl phosphate + H2O. Its pathway is amino-acid biosynthesis; L-histidine biosynthesis; L-histidine from 5-phospho-alpha-D-ribose 1-diphosphate: step 6/9. The chain is Imidazoleglycerol-phosphate dehydratase from Saccharomyces cerevisiae (strain ATCC 204508 / S288c) (Baker's yeast).